Reading from the N-terminus, the 1072-residue chain is DNA-directed RNA polymerase subunit beta (1072 aa).

It belongs to the RNA polymerase beta chain family. In terms of assembly, in plastids the minimal PEP RNA polymerase catalytic core is composed of four subunits: alpha, beta, beta', and beta''. When a (nuclear-encoded) sigma factor is associated with the core the holoenzyme is formed, which can initiate transcription.

The protein localises to the plastid. The protein resides in the chloroplast. The catalysed reaction is RNA(n) + a ribonucleoside 5'-triphosphate = RNA(n+1) + diphosphate. In terms of biological role, DNA-dependent RNA polymerase catalyzes the transcription of DNA into RNA using the four ribonucleoside triphosphates as substrates. This Amborella trichopoda protein is DNA-directed RNA polymerase subunit beta.